Here is a 186-residue protein sequence, read N- to C-terminus: Tumor necrosis factor alpha-induced protein 8-like protein 1 (186 aa).

This sequence belongs to the TNFAIP8 family.

The protein resides in the cytoplasm. This chain is Tumor necrosis factor alpha-induced protein 8-like protein 1 (TNFAIP8L1), found in Gallus gallus (Chicken).